Reading from the N-terminus, the 58-residue chain is Mitochondrial import receptor subunit TOM7 homolog (58 aa).

Over 1 to 16 (MKLSPATKSFIGKTVD) the chain is Cytoplasmic. Residues 17–35 (ISTFAIQWGFVPFVVYLGF) form a helical membrane-spanning segment. Residues 36–58 (KKGAEPMPNGQILPLSAMSLLWG) are Mitochondrial intermembrane-facing.

It belongs to the Tom7 family. In terms of assembly, forms part of the preprotein translocase complex of the outer mitochondrial membrane (TOM complex).

It is found in the mitochondrion outer membrane. This is Mitochondrial import receptor subunit TOM7 homolog (tomm-7) from Caenorhabditis elegans.